The following is a 140-amino-acid chain: uncharacterized protein (140 aa).

A compositionally biased stretch (basic and acidic residues) spans 1–15; sequence MQRQTGHMEDKKRTG. The tract at residues 1–34 is disordered; sequence MQRQTGHMEDKKRTGLESQGTENAFSDGRDGKDG.

This is an uncharacterized protein from Gallus gallus (Chicken).